The following is a 358-amino-acid chain: Biotin synthase (358 aa).

One can recognise a Radical SAM core domain in the interval 47-306; the sequence is KNNSKIKLCA…ALYKIIMPYA (260 aa). The [4Fe-4S] cluster site is built by Cys65, Cys69, and Cys72. Positions 142, 174, 233, and 309 each coordinate [2Fe-2S] cluster.

Belongs to the radical SAM superfamily. Biotin synthase family. In terms of assembly, homodimer. [4Fe-4S] cluster serves as cofactor. It depends on [2Fe-2S] cluster as a cofactor.

The catalysed reaction is (4R,5S)-dethiobiotin + (sulfur carrier)-SH + 2 reduced [2Fe-2S]-[ferredoxin] + 2 S-adenosyl-L-methionine = (sulfur carrier)-H + biotin + 2 5'-deoxyadenosine + 2 L-methionine + 2 oxidized [2Fe-2S]-[ferredoxin]. It participates in cofactor biosynthesis; biotin biosynthesis; biotin from 7,8-diaminononanoate: step 2/2. Catalyzes the conversion of dethiobiotin (DTB) to biotin by the insertion of a sulfur atom into dethiobiotin via a radical-based mechanism. This is Biotin synthase from Methanocaldococcus jannaschii (strain ATCC 43067 / DSM 2661 / JAL-1 / JCM 10045 / NBRC 100440) (Methanococcus jannaschii).